The chain runs to 203 residues: Large ribosomal subunit protein bL25 (203 aa).

This sequence belongs to the bacterial ribosomal protein bL25 family. CTC subfamily. In terms of assembly, part of the 50S ribosomal subunit; part of the 5S rRNA/L5/L18/L25 subcomplex. Contacts the 5S rRNA. Binds to the 5S rRNA independently of L5 and L18.

Functionally, this is one of the proteins that binds to the 5S RNA in the ribosome where it forms part of the central protuberance. This Rickettsia prowazekii (strain Madrid E) protein is Large ribosomal subunit protein bL25.